Here is a 297-residue protein sequence, read N- to C-terminus: Glycerol-3-phosphate dehydrogenase [NAD(P)+] (297 aa).

3 residues coordinate NADPH: Trp11, Arg30, and Lys79. Lys79, Gly107, and Ser109 together coordinate sn-glycerol 3-phosphate. Residue Ala111 participates in NADPH binding. Lys161, Asp214, Ser224, Arg225, and Asn226 together coordinate sn-glycerol 3-phosphate. Lys161 (proton acceptor) is an active-site residue. Position 225 (Arg225) interacts with NADPH. Val249 and Glu251 together coordinate NADPH.

The protein belongs to the NAD-dependent glycerol-3-phosphate dehydrogenase family.

It is found in the cytoplasm. It catalyses the reaction sn-glycerol 3-phosphate + NAD(+) = dihydroxyacetone phosphate + NADH + H(+). The enzyme catalyses sn-glycerol 3-phosphate + NADP(+) = dihydroxyacetone phosphate + NADPH + H(+). Its pathway is membrane lipid metabolism; glycerophospholipid metabolism. Catalyzes the reduction of the glycolytic intermediate dihydroxyacetone phosphate (DHAP) to sn-glycerol 3-phosphate (G3P), the key precursor for phospholipid synthesis. The protein is Glycerol-3-phosphate dehydrogenase [NAD(P)+] of Wolinella succinogenes (strain ATCC 29543 / DSM 1740 / CCUG 13145 / JCM 31913 / LMG 7466 / NCTC 11488 / FDC 602W) (Vibrio succinogenes).